The primary structure comprises 104 residues: L-rhamnose mutarotase (104 aa).

Tyr-18 is a substrate binding site. The Proton donor role is filled by His-22. Substrate is bound by residues Tyr-41 and 76–77 (WW).

Belongs to the rhamnose mutarotase family. Homodimer.

The protein localises to the cytoplasm. The enzyme catalyses alpha-L-rhamnose = beta-L-rhamnose. It functions in the pathway carbohydrate metabolism; L-rhamnose metabolism. Its function is as follows. Involved in the anomeric conversion of L-rhamnose. This Salmonella dublin (strain CT_02021853) protein is L-rhamnose mutarotase.